A 300-amino-acid polypeptide reads, in one-letter code: Acetaldehyde dehydrogenase (300 aa).

10 to 13 (SGNI) is an NAD(+) binding site. The active-site Acyl-thioester intermediate is the Cys-129. Residues 160–168 (SAGPGTRKN) and Asn-271 contribute to the NAD(+) site.

It belongs to the acetaldehyde dehydrogenase family.

It catalyses the reaction acetaldehyde + NAD(+) + CoA = acetyl-CoA + NADH + H(+). The polypeptide is Acetaldehyde dehydrogenase (Alkalilimnicola ehrlichii (strain ATCC BAA-1101 / DSM 17681 / MLHE-1)).